The following is an 86-amino-acid chain: Large ribosomal subunit protein bL31B (86 aa).

The protein belongs to the bacterial ribosomal protein bL31 family. Type B subfamily. As to quaternary structure, part of the 50S ribosomal subunit.

The protein is Large ribosomal subunit protein bL31B of Citrobacter koseri (strain ATCC BAA-895 / CDC 4225-83 / SGSC4696).